The primary structure comprises 68 residues: Metallothionein-3 (68 aa).

Met1 carries the N-acetylmethionine modification. Positions 1 to 30 (MDPETCPCPTGGSCTCSDPCKCEGCTCASS) are beta. 8 residues coordinate a divalent metal cation: Cys6, Cys8, Cys14, Cys16, Cys20, Cys22, Cys25, and Cys27. Positions 31–68 (KKSCCSCCPAECEKCAKDCVCKGGEGAEAEEKKCSCCQ) are alpha. Ser33 bears the Phosphoserine mark. Residues Cys34, Cys35, Cys37, Cys38, Cys42, Cys45, Cys49, Cys51, Cys64, Cys66, and Cys67 each coordinate a divalent metal cation.

Belongs to the metallothionein superfamily. Type 1 family.

Functionally, binds heavy metals. Contains five zinc and one copper atoms per polypeptide chain and only a negligible amount of cadmium. The chain is Metallothionein-3 (MT3) from Bos mutus grunniens (Wild yak).